Here is a 131-residue protein sequence, read N- to C-terminus: Small ribosomal subunit protein uS9c (131 aa).

The protein belongs to the universal ribosomal protein uS9 family.

The protein resides in the plastid. The protein localises to the chloroplast. This is Small ribosomal subunit protein uS9c (rps9) from Emiliania huxleyi (Coccolithophore).